We begin with the raw amino-acid sequence, 219 residues long: Small ribosomal subunit protein uS3c (219 aa).

The KH type-2 domain maps to 43-118 (IKNYVQNNMI…KLNITITRIE (76 aa)).

It belongs to the universal ribosomal protein uS3 family. In terms of assembly, part of the 30S ribosomal subunit.

It is found in the plastid. This chain is Small ribosomal subunit protein uS3c (rps3), found in Cuscuta exaltata (Tall dodder).